The sequence spans 352 residues: MARGRKMSKPRAVEAAAAAAAVAATAPGPEMVERRGPGRPRTNGENVFTGQSKIYTYMSPNKCSGMRSPLQEENSVAQYEVKCQGKPLAGIYRKRDEKRNSGNAIRSSMKAEEQKIKDARRGPLAPFPNQKSEAAEPPKTPTSSCDTPNAAAAKQGLKKPVRGKQAPRKKAQGKTQQNRKLTDFYPVRRSSRKSKAELQSEERKRIDELIESGKEEGMKIDLIDGKGRGVIATKQFSRGEFVVEYHGDLIEITDAKKREALYAQDPSTGCYMYYFQYLSKTYCVDATRETNRLGRLINHSKCGNCQTKLHDIDGVPHLILIASRDIEAGEELLYDYGDRSRASIEAYPWLKH.

A disordered region spans residues 21-51; it reads AVAATAPGPEMVERRGPGRPRTNGENVFTGQ. Ser59 carries the phosphoserine modification. Residues 87 to 202 are disordered; sequence PLAGIYRKRD…KSKAELQSEE (116 aa). Residues 109 to 121 are compositionally biased toward basic and acidic residues; the sequence is MKAEEQKIKDARR. Thr140 carries the phosphothreonine modification. Residues 156-172 show a composition bias toward basic residues; it reads GLKKPVRGKQAPRKKAQ. Residues 216 to 337 form the SET domain; sequence EGMKIDLIDG…AGEELLYDYG (122 aa). S-adenosyl-L-methionine contacts are provided by residues 226–228, Tyr271, and 298–299; these read KGR and NH.

The protein belongs to the class V-like SAM-binding methyltransferase superfamily. Histone-lysine methyltransferase family. PR/SET subfamily. In terms of assembly, interacts with L3MBTL1. Interacts with SIRT2 (phosphorylated form); the interaction is direct, stimulates KMT5A-mediated methyltransferase activity at histone H4 'Lys-20' (H4K20me1) and is increased in a H(2)O(2)-induced oxidative stress-dependent manner. Ubiquitinated and degraded by the DCX(DTL) complex.

The protein localises to the nucleus. It is found in the chromosome. The catalysed reaction is L-lysyl(20)-[histone H4] + S-adenosyl-L-methionine = N(6)-methyl-L-lysyl(20)-[histone H4] + S-adenosyl-L-homocysteine + H(+). It catalyses the reaction L-lysyl-[protein] + S-adenosyl-L-methionine = N(6)-methyl-L-lysyl-[protein] + S-adenosyl-L-homocysteine + H(+). Its function is as follows. Protein-lysine N-methyltransferase that monomethylates both histones and non-histone proteins. Specifically monomethylates 'Lys-20' of histone H4 (H4K20me1). H4K20me1 is enriched during mitosis and represents a specific tag for epigenetic transcriptional repression. Mainly functions in euchromatin regions, thereby playing a central role in the silencing of euchromatic genes. Required for cell proliferation, probably by contributing to the maintenance of proper higher-order structure of DNA during mitosis. Involved in chromosome condensation and proper cytokinesis. Nucleosomes are preferred as substrate compared to free histones. Mediates monomethylation of p53/TP53 at 'Lys-382', leading to repress p53/TP53-target genes. Plays a negative role in TGF-beta response regulation and a positive role in cell migration. This is N-lysine methyltransferase KMT5A from Bos taurus (Bovine).